The chain runs to 135 residues: UPF0102 protein Mkms_2031 (135 aa).

It belongs to the UPF0102 family.

This chain is UPF0102 protein Mkms_2031, found in Mycobacterium sp. (strain KMS).